Here is a 438-residue protein sequence, read N- to C-terminus: Glycosyl hydrolase family 109 protein (438 aa).

Positions 1 to 33 (MDKTSRRDLLKLASLAGIGAGLARSQGSSKSMA) form a signal peptide, tat-type signal. Residues 52 to 53 (GR), Asp-74, 125 to 128 (WVWH), 145 to 146 (EV), and Asn-174 contribute to the NAD(+) site. Residues Tyr-203, Arg-221, 233–236 (YPTH), and Tyr-315 each bind substrate. Tyr-233 contributes to the NAD(+) binding site. The interval 408-438 (GPLSEASVANGSAPQKFPDFTRGKWQTRQPV) is disordered.

This sequence belongs to the Gfo/Idh/MocA family. Glycosyl hydrolase 109 subfamily. NAD(+) serves as cofactor. Post-translationally, predicted to be exported by the Tat system. The position of the signal peptide cleavage has not been experimentally proven.

Glycosidase. The polypeptide is Glycosyl hydrolase family 109 protein (Solibacter usitatus (strain Ellin6076)).